Here is a 412-residue protein sequence, read N- to C-terminus: NADH-quinone oxidoreductase subunit D (412 aa).

The protein belongs to the complex I 49 kDa subunit family. As to quaternary structure, NDH-1 is composed of 14 different subunits. Subunits NuoB, C, D, E, F, and G constitute the peripheral sector of the complex.

Its subcellular location is the cell inner membrane. It catalyses the reaction a quinone + NADH + 5 H(+)(in) = a quinol + NAD(+) + 4 H(+)(out). In terms of biological role, NDH-1 shuttles electrons from NADH, via FMN and iron-sulfur (Fe-S) centers, to quinones in the respiratory chain. The immediate electron acceptor for the enzyme in this species is believed to be a menaquinone. Couples the redox reaction to proton translocation (for every two electrons transferred, four hydrogen ions are translocated across the cytoplasmic membrane), and thus conserves the redox energy in a proton gradient. The protein is NADH-quinone oxidoreductase subunit D of Flavobacterium psychrophilum (strain ATCC 49511 / DSM 21280 / CIP 103535 / JIP02/86).